Reading from the N-terminus, the 305-residue chain is Glycine--tRNA ligase alpha subunit (305 aa).

This sequence belongs to the class-II aminoacyl-tRNA synthetase family. As to quaternary structure, tetramer of two alpha and two beta subunits.

The protein localises to the cytoplasm. The catalysed reaction is tRNA(Gly) + glycine + ATP = glycyl-tRNA(Gly) + AMP + diphosphate. The chain is Glycine--tRNA ligase alpha subunit from Vibrio parahaemolyticus serotype O3:K6 (strain RIMD 2210633).